A 106-amino-acid polypeptide reads, in one-letter code: Large ribosomal subunit protein bL21 (106 aa).

Belongs to the bacterial ribosomal protein bL21 family. In terms of assembly, part of the 50S ribosomal subunit. Contacts protein L20.

Its function is as follows. This protein binds to 23S rRNA in the presence of protein L20. This chain is Large ribosomal subunit protein bL21, found in Streptomyces griseus subsp. griseus (strain JCM 4626 / CBS 651.72 / NBRC 13350 / KCC S-0626 / ISP 5235).